We begin with the raw amino-acid sequence, 143 residues long: Putative protein FPV235 (143 aa).

The sequence is that of Putative protein FPV235 from Vertebrata (FPV).